The following is a 379-amino-acid chain: Neutral protease 2 homolog TRV_03208 (379 aa).

Positions 1-19 are cleaved as a signal peptide; the sequence is MKFFTALAAVGALLAPALA. The propeptide occupies 20 to 187; it reads LPTPASEEAS…DYFSKSLDKR (168 aa). 2 cysteine pairs are disulfide-bonded: Cys193–Cys263 and Cys270–Cys288. N-linked (GlcNAc...) asparagine glycosylation occurs at Asn221. Residue His312 participates in Zn(2+) binding. The active site involves Glu313. Zn(2+) is bound by residues His316 and Asp327.

Belongs to the peptidase M35 family. Zn(2+) serves as cofactor.

The protein localises to the secreted. The enzyme catalyses Preferential cleavage of bonds with hydrophobic residues in P1'. Also 3-Asn-|-Gln-4 and 8-Gly-|-Ser-9 bonds in insulin B chain.. In terms of biological role, secreted metalloproteinase that allows assimilation of proteinaceous substrates. Shows high activities on basic nuclear substrates such as histone and protamine. May be involved in virulence. This chain is Neutral protease 2 homolog TRV_03208, found in Trichophyton verrucosum (strain HKI 0517).